The chain runs to 544 residues: GMP synthase [glutamine-hydrolyzing] (544 aa).

The 199-residue stretch at T12 to G210 folds into the Glutamine amidotransferase type-1 domain. Catalysis depends on C88, which acts as the Nucleophile. Residues H184 and E186 contribute to the active site. Residues W211–R419 form the GMPS ATP-PPase domain. S239–T245 is a binding site for ATP. XMP-binding residues include R312, D481, K536, and E542.

In terms of assembly, homodimer. Also forms a small population of homotetramers. It depends on Mg(2+) as a cofactor.

Its subcellular location is the cytoplasm. It localises to the cytosol. The catalysed reaction is XMP + L-glutamine + ATP + H2O = GMP + L-glutamate + AMP + diphosphate + 2 H(+). The protein operates within purine metabolism; GMP biosynthesis; GMP from XMP (L-Gln route): step 1/1. Its function is as follows. Catalyzes the conversion of xanthine monophosphate (XMP) to GMP in the presence of glutamine and ATP through an adenyl-XMP intermediate. The polypeptide is GMP synthase [glutamine-hydrolyzing] (Cryptococcus neoformans var. neoformans serotype D (strain JEC21 / ATCC MYA-565) (Filobasidiella neoformans)).